We begin with the raw amino-acid sequence, 246 residues long: Triosephosphate isomerase (246 aa).

9 to 11 (NWK) lines the substrate pocket. The Electrophile role is filled by H91. The active-site Proton acceptor is E161. Residues G167, S206, and 227-228 (GG) each bind substrate.

Belongs to the triosephosphate isomerase family. Homodimer.

Its subcellular location is the cytoplasm. The enzyme catalyses D-glyceraldehyde 3-phosphate = dihydroxyacetone phosphate. The protein operates within carbohydrate biosynthesis; gluconeogenesis. Its pathway is carbohydrate degradation; glycolysis; D-glyceraldehyde 3-phosphate from glycerone phosphate: step 1/1. Functionally, involved in the gluconeogenesis. Catalyzes stereospecifically the conversion of dihydroxyacetone phosphate (DHAP) to D-glyceraldehyde-3-phosphate (G3P). This chain is Triosephosphate isomerase, found in Ruegeria sp. (strain TM1040) (Silicibacter sp.).